Here is a 182-residue protein sequence, read N- to C-terminus: MPLLNSLATPYAEALLQVTEARSESQTVAEQCKQLLSVWDSSAEFRDAMVSPVLEPSSKKKALQGLLAEQVTPSLMNLLKVLADRQRLQAFEAVMNRFLELYREQQGITLAQVRSAKPLSEAQQAALSKKVQAMAGTSKVDIDLSVDPALIGGFVVSLGSQVIDASLAGQVRRLGLALAKAS.

Belongs to the ATPase delta chain family. F-type ATPases have 2 components, F(1) - the catalytic core - and F(0) - the membrane proton channel. F(1) has five subunits: alpha(3), beta(3), gamma(1), delta(1), epsilon(1). CF(0) has four main subunits: a(1), b(1), b'(1) and c(10-14). The alpha and beta chains form an alternating ring which encloses part of the gamma chain. F(1) is attached to F(0) by a central stalk formed by the gamma and epsilon chains, while a peripheral stalk is formed by the delta, b and b' chains.

The protein resides in the cellular thylakoid membrane. In terms of biological role, f(1)F(0) ATP synthase produces ATP from ADP in the presence of a proton or sodium gradient. F-type ATPases consist of two structural domains, F(1) containing the extramembraneous catalytic core and F(0) containing the membrane proton channel, linked together by a central stalk and a peripheral stalk. During catalysis, ATP synthesis in the catalytic domain of F(1) is coupled via a rotary mechanism of the central stalk subunits to proton translocation. Functionally, this protein is part of the stalk that links CF(0) to CF(1). It either transmits conformational changes from CF(0) to CF(1) or is implicated in proton conduction. In Synechococcus sp. (strain CC9902), this protein is ATP synthase subunit delta.